We begin with the raw amino-acid sequence, 108 residues long: Precursor of CEP16 (108 aa).

The N-terminal stretch at 1–27 is a signal peptide; that stretch reads MVMAKNLTKFYVVFLVVLMMVVSLLLA. A propeptide spanning residues 28–92 is cleaved from the precursor; that stretch reads IEGRPVKDSS…VGHHRAKGYK (65 aa). N-linked (GlcNAc...) asparagine glycosylation is found at Asn50 and Asn98. The interval 76 to 108 is disordered; it reads QSGPSPGVGHHRAKGYKMFGRANDSGPSPGVGH. 2 positions are modified to hydroxyproline: Pro102 and Pro104.

It belongs to the C-terminally encoded plant signaling peptide (CEP) family. Interacts with CEP receptors (e.g. CEPR1 and CEPR2). In terms of processing, the mature small signaling peptide is generated by proteolytic processing of the longer precursor.

Its subcellular location is the secreted. The protein localises to the extracellular space. The protein resides in the apoplast. Extracellular signaling peptide that may regulate primary root growth rate and systemic nitrogen (N)-demand signaling. In Arabidopsis thaliana (Mouse-ear cress), this protein is Precursor of CEP16.